The sequence spans 86 residues: RNA-binding protein Hfq (86 aa).

A Sm domain is found at 9–68 (DPYLNVLRKERIPVSIYLVNGIKLQGQVESFDQFVVLLKNTVSQMVYKHAISTVVPSRPV).

The protein belongs to the Hfq family. Homohexamer.

Its function is as follows. RNA chaperone that binds small regulatory RNA (sRNAs) and mRNAs to facilitate mRNA translational regulation in response to envelope stress, environmental stress and changes in metabolite concentrations. Also binds with high specificity to tRNAs. The protein is RNA-binding protein Hfq of Saccharophagus degradans (strain 2-40 / ATCC 43961 / DSM 17024).